We begin with the raw amino-acid sequence, 104 residues long: Large ribosomal subunit protein uL24 (104 aa).

It belongs to the universal ribosomal protein uL24 family. As to quaternary structure, part of the 50S ribosomal subunit.

Functionally, one of two assembly initiator proteins, it binds directly to the 5'-end of the 23S rRNA, where it nucleates assembly of the 50S subunit. One of the proteins that surrounds the polypeptide exit tunnel on the outside of the subunit. The polypeptide is Large ribosomal subunit protein uL24 (Buchnera aphidicola subsp. Acyrthosiphon pisum (strain 5A)).